Here is an 81-residue protein sequence, read N- to C-terminus: uncharacterized protein (81 aa).

The first 24 residues, 1 to 24, serve as a signal peptide directing secretion; that stretch reads MRKILKIVSLLILLLLLVYSFFSP. Residues 25–28 lie on the Extracellular side of the membrane; sequence NSQL. Residues 29–49 form a helical membrane-spanning segment; that stretch reads FVFVQLIIIAFLIGFGINCFV. Residues 50 to 81 lie on the Cytoplasmic side of the membrane; that stretch reads KKERYQGTLYFVIAICNITINLDKINELIQSI.

Its subcellular location is the cell membrane. This is an uncharacterized protein from Bacillus subtilis (strain 168).